A 392-amino-acid chain; its full sequence is Succinate--CoA ligase [ADP-forming] subunit beta (392 aa).

The 240-residue stretch at 9 to 248 (KDILRKFGVA…TNEEDPFEVE (240 aa)) folds into the ATP-grasp domain. ATP-binding positions include Lys-50, 57–59 (GRG), Glu-103, Met-106, and Glu-111. Mg(2+)-binding residues include Asn-203 and Asp-217. Residues Asn-268 and 325–327 (GIV) each bind substrate.

It belongs to the succinate/malate CoA ligase beta subunit family. Heterotetramer of two alpha and two beta subunits. Requires Mg(2+) as cofactor.

The enzyme catalyses succinate + ATP + CoA = succinyl-CoA + ADP + phosphate. It carries out the reaction GTP + succinate + CoA = succinyl-CoA + GDP + phosphate. It functions in the pathway carbohydrate metabolism; tricarboxylic acid cycle; succinate from succinyl-CoA (ligase route): step 1/1. Its function is as follows. Succinyl-CoA synthetase functions in the citric acid cycle (TCA), coupling the hydrolysis of succinyl-CoA to the synthesis of either ATP or GTP and thus represents the only step of substrate-level phosphorylation in the TCA. The beta subunit provides nucleotide specificity of the enzyme and binds the substrate succinate, while the binding sites for coenzyme A and phosphate are found in the alpha subunit. This Pelodictyon phaeoclathratiforme (strain DSM 5477 / BU-1) protein is Succinate--CoA ligase [ADP-forming] subunit beta.